A 165-amino-acid polypeptide reads, in one-letter code: Cathelicidin-7 (165 aa).

Positions 1 to 29 (METQRASFSLGRSSLWLLLLGLVVPSASA) are cleaved as a signal peptide. The propeptide occupies 30-130 (QDLSYREAVL…FDITCNNIQS (101 aa)). 2 disulfide bridges follow: cysteine 86/cysteine 97 and cysteine 108/cysteine 125. Arginine 164 bears the Arginine amide mark.

It belongs to the cathelicidin family. In terms of tissue distribution, expressed in bone marrow myeloid cells, spleen and testis.

It is found in the secreted. Functionally, exerts a potent antimicrobial activity. The chain is Cathelicidin-7 (CATHL7) from Bos taurus (Bovine).